Here is a 210-residue protein sequence, read N- to C-terminus: uncharacterized protein (210 aa).

The signal sequence occupies residues M1–A21.

This is an uncharacterized protein from Archaeoglobus fulgidus (strain ATCC 49558 / DSM 4304 / JCM 9628 / NBRC 100126 / VC-16).